The primary structure comprises 101 residues: Small ribosomal subunit protein uS14 (101 aa).

This sequence belongs to the universal ribosomal protein uS14 family. In terms of assembly, part of the 30S ribosomal subunit. Contacts proteins S3 and S10.

Functionally, binds 16S rRNA, required for the assembly of 30S particles and may also be responsible for determining the conformation of the 16S rRNA at the A site. The protein is Small ribosomal subunit protein uS14 of Zymomonas mobilis subsp. mobilis (strain ATCC 31821 / ZM4 / CP4).